A 347-amino-acid chain; its full sequence is ATP-dependent kinase YFH7 (347 aa).

33-41 serves as a coordination point for ATP; it reads GPPGSGKST.

The protein belongs to the YFH7 family.

ATP-dependent kinase that could be involved in endoplasmic reticulum membrane assembly. The chain is ATP-dependent kinase YFH7 (YFH7) from Lachancea thermotolerans (strain ATCC 56472 / CBS 6340 / NRRL Y-8284) (Yeast).